Reading from the N-terminus, the 205-residue chain is ATP-dependent Clp protease proteolytic subunit (205 aa).

Ser98 (nucleophile) is an active-site residue. Residue His123 is part of the active site.

The protein belongs to the peptidase S14 family. Fourteen ClpP subunits assemble into 2 heptameric rings which stack back to back to give a disk-like structure with a central cavity, resembling the structure of eukaryotic proteasomes.

The protein localises to the cytoplasm. The enzyme catalyses Hydrolysis of proteins to small peptides in the presence of ATP and magnesium. alpha-casein is the usual test substrate. In the absence of ATP, only oligopeptides shorter than five residues are hydrolyzed (such as succinyl-Leu-Tyr-|-NHMec, and Leu-Tyr-Leu-|-Tyr-Trp, in which cleavage of the -Tyr-|-Leu- and -Tyr-|-Trp bonds also occurs).. Functionally, cleaves peptides in various proteins in a process that requires ATP hydrolysis. Has a chymotrypsin-like activity. Plays a major role in the degradation of misfolded proteins. The protein is ATP-dependent Clp protease proteolytic subunit of Desulforapulum autotrophicum (strain ATCC 43914 / DSM 3382 / VKM B-1955 / HRM2) (Desulfobacterium autotrophicum).